A 438-amino-acid polypeptide reads, in one-letter code: Xylose isomerase (438 aa).

Active-site residues include H100 and D103. The Mg(2+) site is built by E231, E267, H270, D295, D306, D308, and D338.

It belongs to the xylose isomerase family. In terms of assembly, homotetramer. The cofactor is Mg(2+).

The protein resides in the cytoplasm. It catalyses the reaction alpha-D-xylose = alpha-D-xylulofuranose. The sequence is that of Xylose isomerase from Caldanaerobacter subterraneus subsp. yonseiensis (Thermoanaerobacter yonseiensis).